The sequence spans 373 residues: Melanoma-associated antigen C2 (373 aa).

Residues methionine 1–serine 102 form a disordered region. The span at serine 40–serine 60 shows a compositional bias: low complexity. The span at serine 85–glycine 94 shows a compositional bias: pro residues. An interaction with TRIM28 region spans residues serine 135 to glutamate 373. The MAGE domain occupies leucine 141–alanine 336.

Interacts with TRIM28 and UBE2H. Not expressed in normal tissues, except in germ cells in the seminiferous tubules and in Purkinje cells of the cerebellum. Expressed in various tumors, including melanoma, lymphoma, as well as pancreatic cancer, mammary gland cancer, non-small cell lung cancer and liver cancer. In hepatocellular carcinoma, there is an inverse correlation between tumor differentiation and protein expression, i.e. the lower the differentiation, the higher percentage of expression.

It localises to the cytoplasm. It is found in the nucleus. Its function is as follows. Proposed to enhance ubiquitin ligase activity of RING-type zinc finger-containing E3 ubiquitin-protein ligases. In vitro enhances ubiquitin ligase activity of TRIM28 and stimulates p53/TP53 ubiquitination in presence of Ubl-conjugating enzyme UBE2H leading to p53/TP53 degradation. Proposed to act through recruitment and/or stabilization of the Ubl-conjugating enzymes (E2) at the E3:substrate complex. The protein is Melanoma-associated antigen C2 (MAGEC2) of Homo sapiens (Human).